The primary structure comprises 396 residues: MEQTWRWYGPNDPVSLDDVRQAGATGVVTALHHIPNGQVWPVSEIKQRQAEIAAKGLVWSVVESVPIHEEIKTHSGNYDQHIENYQQTLRNLAECGIDIVCYNFMPILDWTRTDLEYQLPDGSKALRFDQIAFAAFELHILKRPGAEKDYTAEEQAQAKAYFDAMTEADIAKLTGNIIAGLPGAEEGYTLDQFRARLAEYDGIDKAQLRENMAYFLRAIIPVAEQVGLRMAVHPDDPPRPILGLPRIVSTIEDMQWLKETVDSIHNGFTMCTGSYGVRADNDLVKMIETFGDRIHFTHLRSTCREGNPKTFHEGGHLQGDVDMYSVVKAILTEEQRRQAAGDMRPIPMRPDHGHQMLDDLHKKTNPGYSAIGRLKGLAEVRGVELALKRTFFPELK.

It belongs to the mannonate dehydratase family. Fe(2+) is required as a cofactor. Mn(2+) serves as cofactor.

It carries out the reaction D-mannonate = 2-dehydro-3-deoxy-D-gluconate + H2O. The protein operates within carbohydrate metabolism; pentose and glucuronate interconversion. Its function is as follows. Catalyzes the dehydration of D-mannonate. In Yersinia enterocolitica serotype O:8 / biotype 1B (strain NCTC 13174 / 8081), this protein is Mannonate dehydratase.